The following is a 295-amino-acid chain: Protease HtpX (295 aa).

Helical transmembrane passes span 4-24 (IFLF…VLRL) and 42-62 (ALLI…LAIS). Residue His-147 participates in Zn(2+) binding. Glu-148 is an active-site residue. Residue His-151 coordinates Zn(2+). The next 2 helical transmembrane spans lie at 155-175 (GDMV…IFLA) and 197-217 (FWIT…IIVM). Glu-224 contacts Zn(2+).

This sequence belongs to the peptidase M48B family. It depends on Zn(2+) as a cofactor.

It localises to the cell inner membrane. This chain is Protease HtpX, found in Thioalkalivibrio sulfidiphilus (strain HL-EbGR7).